A 339-amino-acid polypeptide reads, in one-letter code: Phosphate acyltransferase (339 aa).

Belongs to the PlsX family. As to quaternary structure, homodimer. Probably interacts with PlsY.

The protein resides in the cytoplasm. The enzyme catalyses a fatty acyl-[ACP] + phosphate = an acyl phosphate + holo-[ACP]. It participates in lipid metabolism; phospholipid metabolism. In terms of biological role, catalyzes the reversible formation of acyl-phosphate (acyl-PO(4)) from acyl-[acyl-carrier-protein] (acyl-ACP). This enzyme utilizes acyl-ACP as fatty acyl donor, but not acyl-CoA. In Pasteurella multocida (strain Pm70), this protein is Phosphate acyltransferase.